Here is a 202-residue protein sequence, read N- to C-terminus: LexA repressor (202 aa).

Positions 28–48 (RAEIAQRLGFRSPNAAEEHLK) form a DNA-binding region, H-T-H motif. Active-site for autocatalytic cleavage activity residues include serine 119 and lysine 156.

This sequence belongs to the peptidase S24 family. In terms of assembly, homodimer.

The enzyme catalyses Hydrolysis of Ala-|-Gly bond in repressor LexA.. Functionally, represses a number of genes involved in the response to DNA damage (SOS response), including recA and lexA. Binds to the 16 bp palindromic sequence 5'-CTGTATATATATACAG-3'. In the presence of single-stranded DNA, RecA interacts with LexA causing an autocatalytic cleavage which disrupts the DNA-binding part of LexA, leading to derepression of the SOS regulon and eventually DNA repair. The polypeptide is LexA repressor (Citrobacter koseri (strain ATCC BAA-895 / CDC 4225-83 / SGSC4696)).